The sequence spans 207 residues: Glycerol-3-phosphate acyltransferase (207 aa).

The next 6 helical transmembrane spans lie at 8–28 (NIVF…LILA), 64–84 (LGIA…LVGI), 92–112 (TLWA…YLGL), 122–142 (LGVY…VWIV), 154–174 (SLLG…GLGI), and 176–196 (SNIP…PNIV).

This sequence belongs to the PlsY family. In terms of assembly, probably interacts with PlsX.

It localises to the cell inner membrane. It carries out the reaction an acyl phosphate + sn-glycerol 3-phosphate = a 1-acyl-sn-glycero-3-phosphate + phosphate. It functions in the pathway lipid metabolism; phospholipid metabolism. Functionally, catalyzes the transfer of an acyl group from acyl-phosphate (acyl-PO(4)) to glycerol-3-phosphate (G3P) to form lysophosphatidic acid (LPA). This enzyme utilizes acyl-phosphate as fatty acyl donor, but not acyl-CoA or acyl-ACP. The polypeptide is Glycerol-3-phosphate acyltransferase (Aliarcobacter butzleri (strain RM4018) (Arcobacter butzleri)).